The chain runs to 145 residues: 3-dehydroquinate dehydratase (145 aa).

Tyrosine 22 (proton acceptor) is an active-site residue. Substrate contacts are provided by asparagine 73, histidine 79, and aspartate 86. Residue histidine 99 is the Proton donor of the active site. Substrate-binding positions include 100–101 (LS) and arginine 110.

It belongs to the type-II 3-dehydroquinase family. Homododecamer.

The catalysed reaction is 3-dehydroquinate = 3-dehydroshikimate + H2O. It functions in the pathway metabolic intermediate biosynthesis; chorismate biosynthesis; chorismate from D-erythrose 4-phosphate and phosphoenolpyruvate: step 3/7. Catalyzes a trans-dehydration via an enolate intermediate. This Prochlorococcus marinus (strain NATL1A) protein is 3-dehydroquinate dehydratase.